Here is a 481-residue protein sequence, read N- to C-terminus: Eukaryotic translation initiation factor 3 subunit L (481 aa).

Positions 1–22 are disordered; that stretch reads MSVDARTAYPGSRPPANMQDES. Positions 262–457 constitute a PCI domain; the sequence is DAIRTFSHIL…DLDYAIEGNL (196 aa).

The protein belongs to the eIF-3 subunit L family. Component of the eukaryotic translation initiation factor 3 (eIF-3) complex.

The protein localises to the cytoplasm. Functionally, component of the eukaryotic translation initiation factor 3 (eIF-3) complex, which is involved in protein synthesis of a specialized repertoire of mRNAs and, together with other initiation factors, stimulates binding of mRNA and methionyl-tRNAi to the 40S ribosome. The eIF-3 complex specifically targets and initiates translation of a subset of mRNAs involved in cell proliferation. This is Eukaryotic translation initiation factor 3 subunit L from Coccidioides immitis (strain RS) (Valley fever fungus).